We begin with the raw amino-acid sequence, 1044 residues long: Elongation factor 3A (1044 aa).

Ser2 is modified (N-acetylserine). One copy of the HEAT 1 repeat lies at 5–42 (QQSIKVLEELFQKLSVATADNRHEIASEVASFLNGNII). Residues Ile42, His44, and Ser83 each contribute to the ADP site. HEAT repeat units lie at residues 86–123 (PYIVQLVPAICTNAGNKDKEIQSVASETLISIVNAVNP), 125–162 (AIKALLPHLTNAIVETNKWQEKIAILAAISAMVDAAKD), 166–203 (LRMPELIPVLSETMWDTKKEVKAAATAAMTKATETVDN), 205–241 (DIERFIPSLIQCIADPTEVPETVHLLGATTFVAEVTP), 242–279 (ATLSIMVPLLSRGLNERETGIKRKSAVIIDNMCKLVED), and 285–323 (PFLGKLLPGLKSNFATIADPEAREVTLRALKTLRRVGNV). N6,N6,N6-trimethyllysine is present on residues Lys187 and Lys196. Residue Lys350 forms a Glycyl lysine isopeptide (Lys-Gly) (interchain with G-Cter in ubiquitin) linkage. Positions 392, 396, and 397 each coordinate ADP. An ABC transporter 1 domain is found at 426–641 (DEGEDLCNCE…CPAAKAYEEL (216 aa)). Lys636 participates in a covalent cross-link: Glycyl lysine isopeptide (Lys-Gly) (interchain with G-Cter in ubiquitin). Ser642 carries the phosphoserine modification. Positions 667–993 (VKVTNMEFQY…AGPRIEKKED (327 aa)) constitute an ABC transporter 2 domain. Asn703 lines the ADP pocket. At Lys789 the chain carries N6,N6,N6-trimethyllysine. ADP-binding residues include Glu922, Asn925, and His951. The residue at position 972 (Thr972) is a Phosphothreonine. Ser974 is modified (phosphoserine). The disordered stretch occupies residues 974–1044 (SGHNWVSGQG…DAYVSSDEEF (71 aa)). The span at 1007-1031 (GGKKKKKLSSAELRKKKKERMKKKK) shows a compositional bias: basic residues. Residues Ser1039 and Ser1040 each carry the phosphoserine modification.

The protein belongs to the ABC transporter superfamily. ABCF family. EF3 subfamily. As to quaternary structure, monomer. Interacts with elongation factor 1A (eEF1A). Interacts through its N-terminus with 18S rRNA. Associates with ribosomes; preferentially binds ribosomes in the post-translocational state (bearing a peptidyl-tRNA in the P-site) in the presence of ATP, suggesting that ATP hydrolysis is required for ribosome dissociation.

The protein localises to the cytoplasm. Its subcellular location is the cytosol. It catalyses the reaction ATP + H2O = ADP + phosphate + H(+). It participates in protein biosynthesis; polypeptide chain elongation. Its activity is regulated as follows. Inhibited by the translational inhibitors neomycin and alpha-sarcin, which suppress the ATPase activity. Ribosome-dependent ATPase that functions in cytoplasmic translation elongation. Required for the ATP-dependent release of deacylated tRNA from the ribosomal E-site during protein biosynthesis. Stimulates the eEF1A-dependent binding of aminoacyl-tRNA to the ribosomal A-site, which has reduced affinity for tRNA as long as the E-site is occupied. Assists translation termination by stimulating the release of nascent protein from the ribosome by release factors. In nutrient-replete conditions, occupies the space on the ribosome bound by GCN1 during amino acid starvation conditions, and therefore indirectly negatively regulates GCN2 kinase activity in replete conditions. This Saccharomyces cerevisiae (strain ATCC 204508 / S288c) (Baker's yeast) protein is Elongation factor 3A (YEF3).